We begin with the raw amino-acid sequence, 1084 residues long: Cellulose synthase A catalytic subunit 6 [UDP-forming] (1084 aa).

Position 1 is an N-acetylmethionine (Met-1). Topologically, residues 1–277 are cytoplasmic; sequence MNTGGRLIAG…KSSKINPYRM (277 aa). Zn(2+)-binding residues include Cys-39, Cys-42, Cys-58, Cys-61, Cys-66, Cys-69, Cys-81, and Cys-84. The RING-type; degenerate zinc finger occupies 39 to 85; sequence CQICRDEIELTVDGEPFVACNECAFPVCRPCYEYERREGNQACPQCK. The chain crosses the membrane as a helical span at residues 278–298; the sequence is LIVLRLVILGLFFHYRILHPV. At 299–300 the chain is on the extracellular side; sequence KD. Residues 301–321 traverse the membrane as a helical segment; sequence AYALWLISVICEIWFAVSWVL. The Cytoplasmic portion of the chain corresponds to 322–868; sequence DQFPKWYPIE…INSVVYPWTS (547 aa). Residues Ser-360, Lys-366, Glu-367, and Asp-396 each coordinate UDP-alpha-D-glucose. Asp-396 is a catalytic residue. Residues 450 to 476 are a coiled coil; it reads VRERRAMKRDYEEFKVKINALVATAQK. UDP-alpha-D-glucose is bound at residue Lys-537. Lys-538 and Asp-562 together coordinate Mn(2+). A coiled-coil region spans residues 675-703; the sequence is RKAKTVAADKKKKNREASKQIHALENIEE. Asp-785 is a catalytic residue. The helical transmembrane segment at 869–889 threads the bilayer; it reads LPLIVYCSLPAICLLTGKFIV. The Extracellular segment spans residues 890–894; that stretch reads PEISN. A helical membrane pass occupies residues 895-915; that stretch reads YASILFMALFSSIAITGILEM. At 916-930 the chain is on the cytoplasmic side; that stretch reads QWGKVGIDDWWRNEQ. Residues 931 to 951 form a helical membrane-spanning segment; it reads FWVIGGVSAHLFALFQGLLKV. The Extracellular portion of the chain corresponds to 952 to 980; sequence LAGVDTNFTVTSKAADDGEFSDLYLFKWT. Asn-958 carries N-linked (GlcNAc...) asparagine glycosylation. The helical transmembrane segment at 981–1001 threads the bilayer; that stretch reads SLLIPPMTLLIINVIGVIVGV. At 1002 to 1012 the chain is on the cytoplasmic side; it reads SDAISNGYDSW. Residues 1013–1033 form a helical membrane-spanning segment; that stretch reads GPLFGRLFFALWVIIHLYPFL. The Extracellular portion of the chain corresponds to 1034–1042; it reads KGLLGKQDR. A helical transmembrane segment spans residues 1043-1063; it reads MPTIIVVWSILLASILTLLWV. Topologically, residues 1064–1084 are cytoplasmic; it reads RVNPFVAKGGPILEICGLDCL.

Belongs to the glycosyltransferase 2 family. Plant cellulose synthase subfamily. As to quaternary structure, interacts with CESA1 and CESA3. Interacts with STL1 and STL2, but not with GOT1. Binds to CSI1 and CSI3. Interacts with PAT24/TIP1. It depends on Zn(2+) as a cofactor. Mn(2+) is required as a cofactor. Post-translationally, S-acylated. In terms of tissue distribution, expressed in germinating seeds, seedlings, roots, stems, leaves and flowers. Not present in mature flowers.

The protein resides in the cell membrane. It catalyses the reaction [(1-&gt;4)-beta-D-glucosyl](n) + UDP-alpha-D-glucose = [(1-&gt;4)-beta-D-glucosyl](n+1) + UDP + H(+). Its pathway is glycan metabolism; plant cellulose biosynthesis. Functionally, catalytic subunit of cellulose synthase terminal complexes ('rosettes'), required for beta-1,4-glucan microfibril crystallization, a major mechanism of the cell wall formation. Involved in the primary cell wall formation. The presence of each protein CESA1 and CESA6 is critical for cell expansion. The hypocotyl elongation is based on a CESA6-dependent cell elongation in dark and a CESA6-independent cell elongation in light. The transition between these two mechanisms requires photosynthesis and PHYB, but not CRY1. The CESA6-dependent cell elongation seems to be independent of gibberellic acid, auxin and ethylene. May be involved in sensitivity to isoxaben. Associates with and moves along cortical microtubules for the process of cellulose deposition. This Arabidopsis thaliana (Mouse-ear cress) protein is Cellulose synthase A catalytic subunit 6 [UDP-forming].